A 209-amino-acid chain; its full sequence is Octanoyltransferase (209 aa).

The BPL/LPL catalytic domain occupies 30 to 209; that stretch reads GEAPEAVYLV…LEVEFIKIFK (180 aa). Residues 69 to 76, 143 to 145, and 156 to 158 contribute to the substrate site; these read RGGKFTFH, AIG, and GIA. Cys-174 functions as the Acyl-thioester intermediate in the catalytic mechanism.

It belongs to the LipB family.

It is found in the cytoplasm. The catalysed reaction is octanoyl-[ACP] + L-lysyl-[protein] = N(6)-octanoyl-L-lysyl-[protein] + holo-[ACP] + H(+). The protein operates within protein modification; protein lipoylation via endogenous pathway; protein N(6)-(lipoyl)lysine from octanoyl-[acyl-carrier-protein]: step 1/2. Catalyzes the transfer of endogenously produced octanoic acid from octanoyl-acyl-carrier-protein onto the lipoyl domains of lipoate-dependent enzymes. Lipoyl-ACP can also act as a substrate although octanoyl-ACP is likely to be the physiological substrate. This Rickettsia bellii (strain OSU 85-389) protein is Octanoyltransferase.